The sequence spans 221 residues: uncharacterized protein (221 aa).

This is an uncharacterized protein from Escherichia coli (strain K12).